A 323-amino-acid chain; its full sequence is Mycothiol acetyltransferase (323 aa).

2 consecutive N-acetyltransferase domains span residues 21–176 (ELLR…VSLR) and 173–323 (VSLR…LTKN). Glu-44 provides a ligand contact to 1D-myo-inositol 2-(L-cysteinylamino)-2-deoxy-alpha-D-glucopyranoside. 98–100 (LAV) contributes to the acetyl-CoA binding site. 1D-myo-inositol 2-(L-cysteinylamino)-2-deoxy-alpha-D-glucopyranoside is bound by residues Glu-200, Lys-240, and Glu-253. Acetyl-CoA contacts are provided by residues 257-259 (VGV) and 264-270 (QGLGLGK). Residue Tyr-291 coordinates 1D-myo-inositol 2-(L-cysteinylamino)-2-deoxy-alpha-D-glucopyranoside.

It belongs to the acetyltransferase family. MshD subfamily. As to quaternary structure, monomer.

It catalyses the reaction 1D-myo-inositol 2-(L-cysteinylamino)-2-deoxy-alpha-D-glucopyranoside + acetyl-CoA = mycothiol + CoA + H(+). Its function is as follows. Catalyzes the transfer of acetyl from acetyl-CoA to desacetylmycothiol (Cys-GlcN-Ins) to form mycothiol. This chain is Mycothiol acetyltransferase, found in Paenarthrobacter aurescens (strain TC1).